Reading from the N-terminus, the 226-residue chain is Transcriptional activator plp-1 (226 aa).

This sequence belongs to the PUR DNA-binding protein family.

The protein localises to the nucleus. The protein resides in the chromosome. Probable transcription activator. Binds telomeric DNA containing repeats of the sequence, 5'-TTAGGC-3'. Binds to end-1 promoter, activating end-1 expression, which is required for endoderm specification during embryonic development. The polypeptide is Transcriptional activator plp-1 (Caenorhabditis elegans).